Here is a 186-residue protein sequence, read N- to C-terminus: Ribosome-recycling factor (186 aa).

The protein belongs to the RRF family.

Its subcellular location is the cytoplasm. Functionally, responsible for the release of ribosomes from messenger RNA at the termination of protein biosynthesis. May increase the efficiency of translation by recycling ribosomes from one round of translation to another. This is Ribosome-recycling factor from Chlorobaculum tepidum (strain ATCC 49652 / DSM 12025 / NBRC 103806 / TLS) (Chlorobium tepidum).